The sequence spans 97 residues: Aspartyl/glutamyl-tRNA(Asn/Gln) amidotransferase subunit C (97 aa).

It belongs to the GatC family. In terms of assembly, heterotrimer of A, B and C subunits.

The catalysed reaction is L-glutamyl-tRNA(Gln) + L-glutamine + ATP + H2O = L-glutaminyl-tRNA(Gln) + L-glutamate + ADP + phosphate + H(+). The enzyme catalyses L-aspartyl-tRNA(Asn) + L-glutamine + ATP + H2O = L-asparaginyl-tRNA(Asn) + L-glutamate + ADP + phosphate + 2 H(+). In terms of biological role, allows the formation of correctly charged Asn-tRNA(Asn) or Gln-tRNA(Gln) through the transamidation of misacylated Asp-tRNA(Asn) or Glu-tRNA(Gln) in organisms which lack either or both of asparaginyl-tRNA or glutaminyl-tRNA synthetases. The reaction takes place in the presence of glutamine and ATP through an activated phospho-Asp-tRNA(Asn) or phospho-Glu-tRNA(Gln). The polypeptide is Aspartyl/glutamyl-tRNA(Asn/Gln) amidotransferase subunit C (Clostridium botulinum (strain Eklund 17B / Type B)).